Here is a 189-residue protein sequence, read N- to C-terminus: Elongation factor P (189 aa).

Position 34 is an N6-(3,6-diaminohexanoyl)-5-hydroxylysine (lysine 34).

The protein belongs to the elongation factor P family. May be beta-lysylated on the epsilon-amino group of Lys-34 by the combined action of EpmA and EpmB, and then hydroxylated on the C5 position of the same residue by EpmC (if this protein is present). Lysylation is critical for the stimulatory effect of EF-P on peptide-bond formation. The lysylation moiety may extend toward the peptidyltransferase center and stabilize the terminal 3-CCA end of the tRNA. Hydroxylation of the C5 position on Lys-34 may allow additional potential stabilizing hydrogen-bond interactions with the P-tRNA.

It localises to the cytoplasm. Its pathway is protein biosynthesis; polypeptide chain elongation. Its function is as follows. Involved in peptide bond synthesis. Alleviates ribosome stalling that occurs when 3 or more consecutive Pro residues or the sequence PPG is present in a protein, possibly by augmenting the peptidyl transferase activity of the ribosome. Modification of Lys-34 is required for alleviation. The protein is Elongation factor P of Acinetobacter baumannii (strain AB307-0294).